A 304-amino-acid chain; its full sequence is MAKINLRSIFCHLVNDDKFLSVVVEDDHSTGSSKVKKNSNKNKINIMANMVSEYVTLSPYETQGYALLPHNIKCLLTPDYQRLGINGKMVKHFEPINISFLHSLNILLRPEIYYLNFEEHTKNYSLLEGFLSHMIQRNYQIDKIKNTKKVQAVNKELIKNLSEGKISHDLIQYIVNIFEINLLVFDFAKMDILLYWSKGTKYPYFNLFKDIYCMSYIYGNYEPITCLQNNISEQQKRKMYTYILTNLDNIKTIQQIQLSAPTLLYLSTWDFCVTDIEKIYETFFRNKNSKEILEDVINNSNICN.

This is an uncharacterized protein from Acanthamoeba polyphaga (Amoeba).